We begin with the raw amino-acid sequence, 119 residues long: NAD(P)H-quinone oxidoreductase subunit M (119 aa).

It belongs to the complex I NdhM subunit family. As to quaternary structure, NDH-1 can be composed of about 15 different subunits; different subcomplexes with different compositions have been identified which probably have different functions.

It is found in the cellular thylakoid membrane. The catalysed reaction is a plastoquinone + NADH + (n+1) H(+)(in) = a plastoquinol + NAD(+) + n H(+)(out). The enzyme catalyses a plastoquinone + NADPH + (n+1) H(+)(in) = a plastoquinol + NADP(+) + n H(+)(out). Its function is as follows. NDH-1 shuttles electrons from an unknown electron donor, via FMN and iron-sulfur (Fe-S) centers, to quinones in the respiratory and/or the photosynthetic chain. The immediate electron acceptor for the enzyme in this species is believed to be plastoquinone. Couples the redox reaction to proton translocation, and thus conserves the redox energy in a proton gradient. Cyanobacterial NDH-1 also plays a role in inorganic carbon-concentration. The chain is NAD(P)H-quinone oxidoreductase subunit M from Picosynechococcus sp. (strain ATCC 27264 / PCC 7002 / PR-6) (Agmenellum quadruplicatum).